The chain runs to 132 residues: Small ribosomal subunit protein uS8c (132 aa).

Belongs to the universal ribosomal protein uS8 family. In terms of assembly, part of the 30S ribosomal subunit.

It localises to the plastid. The protein resides in the chloroplast. Its function is as follows. One of the primary rRNA binding proteins, it binds directly to 16S rRNA central domain where it helps coordinate assembly of the platform of the 30S subunit. This Gracilaria tenuistipitata var. liui (Red alga) protein is Small ribosomal subunit protein uS8c (rps8).